The sequence spans 200 residues: ATP-dependent Clp protease proteolytic subunit (200 aa).

The active-site Nucleophile is the serine 102. The active site involves histidine 127.

This sequence belongs to the peptidase S14 family. Fourteen ClpP subunits assemble into 2 heptameric rings which stack back to back to give a disk-like structure with a central cavity, resembling the structure of eukaryotic proteasomes.

The protein localises to the cytoplasm. The catalysed reaction is Hydrolysis of proteins to small peptides in the presence of ATP and magnesium. alpha-casein is the usual test substrate. In the absence of ATP, only oligopeptides shorter than five residues are hydrolyzed (such as succinyl-Leu-Tyr-|-NHMec, and Leu-Tyr-Leu-|-Tyr-Trp, in which cleavage of the -Tyr-|-Leu- and -Tyr-|-Trp bonds also occurs).. In terms of biological role, cleaves peptides in various proteins in a process that requires ATP hydrolysis. Has a chymotrypsin-like activity. Plays a major role in the degradation of misfolded proteins. This is ATP-dependent Clp protease proteolytic subunit from Dehalococcoides mccartyi (strain ATCC BAA-2266 / KCTC 15142 / 195) (Dehalococcoides ethenogenes (strain 195)).